The following is a 314-amino-acid chain: MPNLRGIRDRIKSVKNTQKITKAMRLVAAARVRRAQEQVLAGRPFADRLVGLLFRLRSRLRFEDVQSPLMERRDVQKVLVLVIAGDRGLCGAYNSNIIRRTVQYLRELQQQGKQFALYLVGNKAISFFRRSNFPIAKTLTNVDPNTPLEGANQLITDDILAPFLSGEYDQVELVYTRFVSLISSRPTVQTLLPLDPDALGQEDETFKLITKGGGFEVLREKQQVRTEPEFAADTIFEQDPTQLLDALLPLYLTSEVLHALQESSASELAARMTAMSAASDNAKKLLSTLTIVYNKARQASITQEILEVVSGANA.

It belongs to the ATPase gamma chain family. As to quaternary structure, F-type ATPases have 2 components, CF(1) - the catalytic core - and CF(0) - the membrane proton channel. CF(1) has five subunits: alpha(3), beta(3), gamma(1), delta(1), epsilon(1). CF(0) has three main subunits: a, b and c.

The protein localises to the cell inner membrane. Produces ATP from ADP in the presence of a proton gradient across the membrane. The gamma chain is believed to be important in regulating ATPase activity and the flow of protons through the CF(0) complex. The sequence is that of ATP synthase gamma chain from Gloeobacter violaceus (strain ATCC 29082 / PCC 7421).